The sequence spans 196 residues: MNTSRFIKCVTVGDGAVGKTCMLISYTSNTFPTDYVPTVFDNFSANVVVDGSTVNLGLWDTAGQEDYNRLRPLSYRGADVFLLAFSLISRASYENVHKKWIPELRHYAPNVPIVLVGTKLDLRDDKQFLSDNPGAISITTSQGEELKKMIGAVTYIECSSKTQQNVKAVFDVAIKIALRPPKPKRKPIKRRSCAFL.

Residue 13 to 20 participates in GTP binding; sequence GDGAVGKT. The Effector region signature appears at 35-43; the sequence is YVPTVFDNF. GTP contacts are provided by residues 60–64 and 118–121; these read DTAGQ and TKLD. C193 carries the cysteine methyl ester modification. C193 carries the S-geranylgeranyl cysteine lipid modification. Positions 194–196 are cleaved as a propeptide — removed in mature form; that stretch reads AFL.

This sequence belongs to the small GTPase superfamily. Rho family.

It localises to the cytoplasm. It is found in the membrane. Functionally, inactive GDP-bound Rho GTPases reside in the cytosol, are found in a complex with Rho GDP-dissociation inhibitors (Rho GDIs), and are released from the GDI protein in order to translocate to membranes upon activation. In Gossypium hirsutum (Upland cotton), this protein is Rac-like GTP-binding protein RAC9 (RAC9).